The following is a 1501-amino-acid chain: Ribulose bisphosphate carboxylase (1501 aa).

Substrate is bound at residue Asn111. Residue Lys166 is the Proton acceptor of the active site. A substrate-binding site is contributed by Lys168. Lys191, Asp193, and Glu194 together coordinate Mg(2+). An N6-carboxylysine modification is found at Lys191. The active-site Proton acceptor is His287. The substrate site is built by Arg288, His321, and Ser368. Positions Ser486–Ala508 are cleaved as a propeptide — linker. A substrate-binding site is contributed by Asn619. The active-site Proton acceptor is Lys674. Lys676 contributes to the substrate binding site. Residues Lys699, Asp701, and Glu702 each coordinate Mg(2+). Lys699 is modified (N6-carboxylysine). The active-site Proton acceptor is the His795. The substrate site is built by Arg796, His829, and Ser876. Residues Ser994–Ala1016 constitute a propeptide, linker. Residue Asn1127 coordinates substrate. The active-site Proton acceptor is the Lys1182. Lys1184 lines the substrate pocket. 3 residues coordinate Mg(2+): Lys1207, Asp1209, and Glu1210. Position 1207 is an N6-carboxylysine (Lys1207). Catalysis depends on His1303, which acts as the Proton acceptor. 3 residues coordinate substrate: Arg1304, His1337, and Ser1384.

The protein belongs to the RuBisCO large chain family. Type II subfamily. In terms of assembly, homodimer. Mg(2+) is required as a cofactor.

The protein localises to the plastid. Its subcellular location is the chloroplast. The enzyme catalyses 2 (2R)-3-phosphoglycerate + 2 H(+) = D-ribulose 1,5-bisphosphate + CO2 + H2O. It catalyses the reaction D-ribulose 1,5-bisphosphate + O2 = 2-phosphoglycolate + (2R)-3-phosphoglycerate + 2 H(+). Functionally, ruBisCO catalyzes two reactions: the carboxylation of D-ribulose 1,5-bisphosphate, the primary event in carbon dioxide fixation, as well as the oxidative fragmentation of the pentose substrate. Both reactions occur simultaneously and in competition at the same active site. This is Ribulose bisphosphate carboxylase (rbcL) from Symbiodinium sp. (Dinoflagellate).